The chain runs to 130 residues: DNA-directed RNA polymerase subunit omega (130 aa).

Residues 109-130 form a disordered region; sequence EEELLKGLEGLAPPEEQPEEDE.

The protein belongs to the RNA polymerase subunit omega family. As to quaternary structure, the RNAP catalytic core consists of 2 alpha, 1 beta, 1 beta' and 1 omega subunit. When a sigma factor is associated with the core the holoenzyme is formed, which can initiate transcription.

It carries out the reaction RNA(n) + a ribonucleoside 5'-triphosphate = RNA(n+1) + diphosphate. In terms of biological role, promotes RNA polymerase assembly. Latches the N- and C-terminal regions of the beta' subunit thereby facilitating its interaction with the beta and alpha subunits. This is DNA-directed RNA polymerase subunit omega from Rhodopseudomonas palustris (strain BisB5).